The chain runs to 1182 residues: Rho GTPase-activating protein 20 (1182 aa).

Residues 1-40 form a disordered region; sequence MEAMSPQQDALGAQPGRSSSLTGMSRIAGGPGTKKKMKTL. Ser46 carries the post-translational modification Phosphoserine. Positions 86-187 constitute a PH domain; it reads LLIDGPVELK…SLLQRYIALE (102 aa). The Ras-associating domain occupies 194 to 283; sequence KSIPLKIFAK…TALLTQGSKD (90 aa). In terms of domain architecture, Rho-GAP spans 365 to 551; that stretch reads VSLPDICEND…FLIENCCRIF (187 aa). A phosphoserine mark is found at Ser704 and Ser730. Disordered regions lie at residues 744-791, 932-953, 981-1009, and 1140-1182; these read KQTQ…IQET, ASYSSLSSPGTSPSGSSVSSQD, QRKQEELSSDCDSPSLVSGMPGPSTGQAS, and EESG…GDRH. Residues 757-775 are compositionally biased toward polar residues; sequence FKQSSVTGTDVSKRNTANE. Positions 933-953 are enriched in low complexity; it reads SYSSLSSPGTSPSGSSVSSQD.

As to expression, highest expression is found in testis. Ubiquitously expressed in extragonadal tissues.

Its function is as follows. GTPase activator for the Rho-type GTPases by converting them to an inactive GDP-bound state. The protein is Rho GTPase-activating protein 20 (Arhgap20) of Rattus norvegicus (Rat).